A 323-amino-acid chain; its full sequence is Serine/threonine-protein phosphatase PP1 (323 aa).

The Mn(2+) site is built by aspartate 63, histidine 65, aspartate 91, and asparagine 123. The active-site Proton donor is the histidine 124. Histidine 172 and histidine 247 together coordinate Mn(2+).

The protein belongs to the PPP phosphatase family. PP-1 subfamily. Requires Mn(2+) as cofactor.

The catalysed reaction is O-phospho-L-seryl-[protein] + H2O = L-seryl-[protein] + phosphate. The enzyme catalyses O-phospho-L-threonyl-[protein] + H2O = L-threonyl-[protein] + phosphate. Plays an important role in the control of mitosis by reversing the action of the nimA kinase. In Emericella nidulans (strain FGSC A4 / ATCC 38163 / CBS 112.46 / NRRL 194 / M139) (Aspergillus nidulans), this protein is Serine/threonine-protein phosphatase PP1 (bimG).